The primary structure comprises 899 residues: Bifunctional uridylyltransferase/uridylyl-removing enzyme (899 aa).

A uridylyltransferase region spans residues 1-342 (MPQMDPELFD…RAGESGPATP (342 aa)). The tract at residues 343-705 (LNSRFQVRDG…TTQREFEGGT (363 aa)) is uridylyl-removing. In terms of domain architecture, HD spans 461–583 (VDAHTLNLIK…VGDQTHLDYL (123 aa)). 2 consecutive ACT domains span residues 706–784 (QIFI…DEYP) and 816–897 (ILEL…SLQI).

Belongs to the GlnD family. The cofactor is Mg(2+).

It catalyses the reaction [protein-PII]-L-tyrosine + UTP = [protein-PII]-uridylyl-L-tyrosine + diphosphate. The catalysed reaction is [protein-PII]-uridylyl-L-tyrosine + H2O = [protein-PII]-L-tyrosine + UMP + H(+). Uridylyltransferase (UTase) activity is inhibited by glutamine, while glutamine activates uridylyl-removing (UR) activity. Functionally, modifies, by uridylylation and deuridylylation, the PII regulatory proteins (GlnB and homologs), in response to the nitrogen status of the cell that GlnD senses through the glutamine level. Under low glutamine levels, catalyzes the conversion of the PII proteins and UTP to PII-UMP and PPi, while under higher glutamine levels, GlnD hydrolyzes PII-UMP to PII and UMP (deuridylylation). Thus, controls uridylylation state and activity of the PII proteins, and plays an important role in the regulation of nitrogen assimilation and metabolism. This chain is Bifunctional uridylyltransferase/uridylyl-removing enzyme, found in Ectopseudomonas mendocina (strain ymp) (Pseudomonas mendocina).